The chain runs to 167 residues: MLKKIIPAIVLIAGTSGVVNAGNWQYKSLDVNVNIEQNFIPDIDSAVRIIPVNYDSDPKLNSQLYTVEMTIPAGVSAVKIVPTDSLTSSGQQIGKLVNVNNPDQNMNYYIRKDSGAGKFMAGQKGSFSVKENTSYTFSAIYTGGEYPNSGYSSGTYAGHLTVSFYSN.

The first 21 residues, 1–21 (MLKKIIPAIVLIAGTSGVVNA), serve as a signal peptide directing secretion.

The protein localises to the fimbrium. In Escherichia coli, this protein is CS6 fimbrial subunit B (cssB).